Consider the following 287-residue polypeptide: Probable aquaporin PIP1-4 (287 aa).

The residue at position 1 (Met-1) is an N-acetylmethionine. The tract at residues 1–36 (MEGKEEDVRVGANKFPERQPIGTSAQSTDKDYKEPP) is disordered. The Cytoplasmic segment spans residues 1-55 (MEGKEEDVRVGANKFPERQPIGTSAQSTDKDYKEPPPAPLFEPGELSSWSFYRAG). Residues 56–76 (IAEFIATFLFLYITVLTVMGV) form a helical membrane-spanning segment. The Extracellular segment spans residues 77-92 (KRAPNMCASVGIQGIA). A helical membrane pass occupies residues 93–113 (WAFGGMIFALVYCTAGISGGH). Residues 114-133 (INPAVTFGLFLARKLSLTRA) lie on the Cytoplasmic side of the membrane. Positions 115 to 117 (NPA) match the NPA 1 motif. A helical transmembrane segment spans residues 134–154 (VFYMIMQCLGAICGAGVVKGF). At 155–175 (QPTPYQTLGGGANTVAHGYTK) the chain is on the extracellular side. A helical transmembrane segment spans residues 176–196 (GSGLGAEIIGTFVLVYTVFSA). Over 197 to 209 (TDAKRSARDSHVP) the chain is Cytoplasmic. The helical transmembrane segment at 210–230 (ILAPLPIGFAVFLVHLATIPI) threads the bilayer. Residues 231-257 (TGTGINPARSLGAAIIYNKDHSWDDHW) are Extracellular-facing. An NPA 2 motif is present at residues 236–238 (NPA). Residues 258 to 278 (IFWVGPFIGAALAALYHQIVI) traverse the membrane as a helical segment. At 279-287 (RAIPFKSKS) the chain is on the cytoplasmic side. Position 285 is a phosphoserine (Ser-285).

This sequence belongs to the MIP/aquaporin (TC 1.A.8) family. PIP (TC 1.A.8.11) subfamily. In terms of tissue distribution, predominantly expressed in roots and green siliques. Also expressed above ground and in flower buds.

Its subcellular location is the cell membrane. Its function is as follows. Aquaporins facilitate the transport of water and small neutral solutes across cell membranes. The chain is Probable aquaporin PIP1-4 (PIP1.4) from Arabidopsis thaliana (Mouse-ear cress).